Reading from the N-terminus, the 874-residue chain is Alanine--tRNA ligase (874 aa).

Zn(2+) contacts are provided by His-564, His-568, Cys-665, and His-669.

Belongs to the class-II aminoacyl-tRNA synthetase family. Zn(2+) is required as a cofactor.

The protein resides in the cytoplasm. It carries out the reaction tRNA(Ala) + L-alanine + ATP = L-alanyl-tRNA(Ala) + AMP + diphosphate. Catalyzes the attachment of alanine to tRNA(Ala) in a two-step reaction: alanine is first activated by ATP to form Ala-AMP and then transferred to the acceptor end of tRNA(Ala). Also edits incorrectly charged Ser-tRNA(Ala) and Gly-tRNA(Ala) via its editing domain. The protein is Alanine--tRNA ligase of Acidovorax sp. (strain JS42).